The primary structure comprises 123 residues: Large ribosomal subunit protein uL29 (123 aa).

Lysine 19 carries the post-translational modification N6-acetyllysine. Lysine 25 participates in a covalent cross-link: Glycyl lysine isopeptide (Lys-Gly) (interchain with G-Cter in SUMO2). Serine 29 carries the phosphoserine modification. Residue lysine 43 is modified to N6-acetyllysine. Positions proline 85–alanine 123 are disordered. Over residues lysine 86–asparagine 96 the composition is skewed to basic residues.

Belongs to the universal ribosomal protein uL29 family. In terms of assembly, component of the large ribosomal subunit.

The protein localises to the cytoplasm. Functionally, component of the large ribosomal subunit. The ribosome is a large ribonucleoprotein complex responsible for the synthesis of proteins in the cell. The protein is Large ribosomal subunit protein uL29 (RPL35) of Oryctolagus cuniculus (Rabbit).